A 505-amino-acid chain; its full sequence is ATP synthase subunit alpha, chloroplastic (505 aa).

170-177 (GDRQTGKT) contributes to the ATP binding site.

This sequence belongs to the ATPase alpha/beta chains family. In terms of assembly, F-type ATPases have 2 components, CF(1) - the catalytic core - and CF(0) - the membrane proton channel. CF(1) has five subunits: alpha(3), beta(3), gamma(1), delta(1), epsilon(1). CF(0) has four main subunits: a, b, b' and c.

It localises to the plastid. The protein resides in the chloroplast thylakoid membrane. The enzyme catalyses ATP + H2O + 4 H(+)(in) = ADP + phosphate + 5 H(+)(out). Produces ATP from ADP in the presence of a proton gradient across the membrane. The alpha chain is a regulatory subunit. The chain is ATP synthase subunit alpha, chloroplastic from Mesostigma viride (Green alga).